We begin with the raw amino-acid sequence, 238 residues long: 15,16-dihydrobiliverdin:ferredoxin oxidoreductase (238 aa).

This sequence belongs to the HY2 family.

The catalysed reaction is 15,16-dihydrobiliverdin + oxidized 2[4Fe-4S]-[ferredoxin] = biliverdin IXalpha + reduced 2[4Fe-4S]-[ferredoxin] + 2 H(+). Functionally, catalyzes the two-electron reduction of biliverdin IX-alpha at the C15 methine bridge. The chain is 15,16-dihydrobiliverdin:ferredoxin oxidoreductase from Prochlorococcus marinus (strain MIT 9211).